Here is a 483-residue protein sequence, read N- to C-terminus: MHHKSLAELASALKAREFSSEELTQHYLKRIERLNEDLNSFITVSTEEALKQAKAADAILQSGEGSSITGIPLAHKDIFCTTGVKTSCGSKMLDNFTAPYNATVVSRLKTAGAVMLGKTNMDEFAMGSSNETSFYGSVKNPWAHDRVPGGSSGGSAAAVAARLTPAATGTDTGGSIRQPAALCGITGLKPTYGRVSRYGMIAFASSLDQGGPMARTAQDAALLLNVMAGFDERDSTSVAQDVPDYTLSLEESIKGIKIGLPTEYFDENLNPGIAIPIEAAIKEFERLGAQIREISLPNTKLAVPTYYVVAPAECSSNLSRYDGTRFGYRCDNPKDLLELYCRSRGEGFGPEVKRRILIGTYVLSAGYYDAYYLKAQKLRRLISDDFKQALTEVDVIMGPTSPTPAFRLGEKSDDPVAMYLADIYTINVNLAGLPALSIPAGFAQGLPVGLQIIGNYFSESRLLNLAHRYQQVTDWHDRIPAGY.

Active-site charge relay system residues include lysine 76 and serine 151. The active-site Acyl-ester intermediate is serine 175.

It belongs to the amidase family. GatA subfamily. As to quaternary structure, heterotrimer of A, B and C subunits.

The enzyme catalyses L-glutamyl-tRNA(Gln) + L-glutamine + ATP + H2O = L-glutaminyl-tRNA(Gln) + L-glutamate + ADP + phosphate + H(+). In terms of biological role, allows the formation of correctly charged Gln-tRNA(Gln) through the transamidation of misacylated Glu-tRNA(Gln) in organisms which lack glutaminyl-tRNA synthetase. The reaction takes place in the presence of glutamine and ATP through an activated gamma-phospho-Glu-tRNA(Gln). The sequence is that of Glutamyl-tRNA(Gln) amidotransferase subunit A from Nitrosococcus oceani (strain ATCC 19707 / BCRC 17464 / JCM 30415 / NCIMB 11848 / C-107).